Consider the following 328-residue polypeptide: Ribosomal RNA large subunit methyltransferase F (328 aa).

The segment at 1-31 (MTDTRKPPRKKPQRPAKPAAPREKATLHPRN) is disordered.

It belongs to the methyltransferase superfamily. METTL16/RlmF family.

Its subcellular location is the cytoplasm. It catalyses the reaction adenosine(1618) in 23S rRNA + S-adenosyl-L-methionine = N(6)-methyladenosine(1618) in 23S rRNA + S-adenosyl-L-homocysteine + H(+). Specifically methylates the adenine in position 1618 of 23S rRNA. The protein is Ribosomal RNA large subunit methyltransferase F of Pseudomonas syringae pv. syringae (strain B728a).